A 367-amino-acid chain; its full sequence is Anhydro-N-acetylmuramic acid kinase (367 aa).

11-18 contacts ATP; the sequence is GTSLDGVD.

It belongs to the anhydro-N-acetylmuramic acid kinase family.

It carries out the reaction 1,6-anhydro-N-acetyl-beta-muramate + ATP + H2O = N-acetyl-D-muramate 6-phosphate + ADP + H(+). The protein operates within amino-sugar metabolism; 1,6-anhydro-N-acetylmuramate degradation. It functions in the pathway cell wall biogenesis; peptidoglycan recycling. Catalyzes the specific phosphorylation of 1,6-anhydro-N-acetylmuramic acid (anhMurNAc) with the simultaneous cleavage of the 1,6-anhydro ring, generating MurNAc-6-P. Is required for the utilization of anhMurNAc either imported from the medium or derived from its own cell wall murein, and thus plays a role in cell wall recycling. This chain is Anhydro-N-acetylmuramic acid kinase, found in Rhodopseudomonas palustris (strain ATCC BAA-98 / CGA009).